The chain runs to 42 residues: Photosystem II reaction center protein J (42 aa).

The chain crosses the membrane as a helical span at residues 10 to 30 (IPLWIIGTLAGTLVIGLLAIF).

Belongs to the PsbJ family. As to quaternary structure, PSII is composed of 1 copy each of membrane proteins PsbA, PsbB, PsbC, PsbD, PsbE, PsbF, PsbH, PsbI, PsbJ, PsbK, PsbL, PsbM, PsbT, PsbX, PsbY, PsbZ, Psb30/Ycf12, at least 3 peripheral proteins of the oxygen-evolving complex and a large number of cofactors. It forms dimeric complexes.

It is found in the plastid. Its subcellular location is the chloroplast thylakoid membrane. In terms of biological role, one of the components of the core complex of photosystem II (PSII). PSII is a light-driven water:plastoquinone oxidoreductase that uses light energy to abstract electrons from H(2)O, generating O(2) and a proton gradient subsequently used for ATP formation. It consists of a core antenna complex that captures photons, and an electron transfer chain that converts photonic excitation into a charge separation. This Chaetosphaeridium globosum (Charophycean green alga) protein is Photosystem II reaction center protein J.